Consider the following 140-residue polypeptide: Ubiquitin-like protein ATG12 (140 aa).

A disordered region spans residues 1–50 (MAEEPQSVLQLPTSIAAGGEGLTDVSPETTTPEPPSSAAVSPGTEEPAGD). Residues 25 to 42 (VSPETTTPEPPSSAAVSP) show a composition bias toward low complexity. A Glycyl lysine isopeptide (Gly-Lys) (interchain with K-130 in ATG5) cross-link involves residue Gly140.

Belongs to the ATG12 family. In terms of assembly, forms a conjugate with ATG5. Part of the minor complex composed of 4 sets of ATG12-ATG5 and ATG16L1 (400 kDa); this complex interacts with ATG3 leading to disruption of ATG7 interaction and promotion of ATG8-like proteins lipidation. Forms an 800-kDa complex composed of ATG12-ATG5 and ATG16L2. Interacts with DHX58/RIG-1, IFIH1/MDA5 and MAVS/IPS-1 in monomeric form as well as in ATG12-ATG5 conjugate. The interaction with MAVS is further enhanced upon vesicular stomatitis virus (VSV) infection. Interacts with ATG3; this interaction is essential for phosphatidylethanolamine (PE)-conjugated ATG8-like proteins formation. Interacts with ATG7. Interacts with ATG10. The ATG12-ATG5 conjugate interacts with RAB33A; this interaction is bridged by ATG16L1 and promotes ATG12-ATG5-ATG16L1 complex recruitment to phagophores. Interacts with TECPR1. Interacts with SH3BGRL. The ATG12-ATG5 conjugate interacts with PDCD6IP (via the BRO1 domain); this interaction is bridged by ATG12 and promotes multiple PDCD6IP-mediated functions such as endolysosomal trafficking, macroautophagy and exosome biogenesis. In terms of processing, acetylated by EP300. In terms of tissue distribution, ubiquitous.

It localises to the cytoplasm. The protein resides in the preautophagosomal structure membrane. Ubiquitin-like protein involved in autophagy vesicles formation. Conjugation with ATG5 through a ubiquitin-like conjugating system involving also ATG7 as an E1-like activating enzyme and ATG10 as an E2-like conjugating enzyme, is essential for its function. The ATG12-ATG5 conjugate acts as an E3-like enzyme which is required for lipidation of ATG8 family proteins and their association to the vesicle membranes. As part of the ATG8 conjugation system with ATG5 and ATG16L1, required for recruitment of LRRK2 to stressed lysosomes and induction of LRRK2 kinase activity in response to lysosomal stress. Its function is as follows. (Microbial infection) May act as a proviral factor. In association with ATG5, negatively regulates the innate antiviral immune response by impairing the type I IFN production pathway upon vesicular stomatitis virus (VSV) infection. Required for the translation of incoming hepatitis C virus (HCV) RNA and, thereby, for the initiation of HCV replication, but not required once infection is established. The protein is Ubiquitin-like protein ATG12 of Homo sapiens (Human).